A 1142-amino-acid polypeptide reads, in one-letter code: Probable serine/threonine-protein kinase fhkB (1142 aa).

Residues 1-16 show a composition bias toward polar residues; the sequence is MSQDIQTQNSYSDELY. Disordered stretches follow at residues 1-359, 374-404, and 432-451; these read MSQD…RLSQ, NTHT…KKQQ, and QIIG…QPPV. 2 stretches are compositionally biased toward low complexity: residues 17–72 and 83–157; these read SSQI…FSQN and QNSY…PSSQ. Residues 158–178 show a composition bias toward polar residues; that stretch reads KRFFQSQNDDFVPSSQVTSLQ. A coiled-coil region spans residues 186-302; it reads IQQQQQQQQQ…DYEQENDDDD (117 aa). The segment covering 187 to 260 has biased composition (low complexity); the sequence is QQQQQQQQQQ…QQTQQQQQQP (74 aa). 2 stretches are compositionally biased toward acidic residues: residues 261–277 and 283–325; these read QEDD…DNYE and EGEE…EEES. The segment covering 333–348 has biased composition (low complexity); sequence RALQSRSSQSRPLLRS. Over residues 374–397 the composition is skewed to polar residues; the sequence is NTHTNQLGQSSQQTNSPNVHFNSL. A coiled-coil region spans residues 393-434; that stretch reads HFNSLQQKKKQQQQQQQQQQQQQQQQQQQQQQQQQQQSQQII. Over residues 432-443 the composition is skewed to low complexity; it reads QIIGSQSSQSSQ. An FHA domain is found at 480–551; it reads IVVGRSSSCD…NGSYINGELI (72 aa). Residues 625–885 enclose the Protein kinase domain; sequence YYFVKEIGSG…IKEALNHPWF (261 aa). Residues 631–639 and Lys654 each bind ATP; that span reads IGSGGYGIV. The active-site Proton acceptor is the Asp747. The interval 947 to 1142 is disordered; it reads FDNNNNNNNN…HQQYTQHTTM (196 aa). Residues 949 to 1034 are compositionally biased toward low complexity; that stretch reads NNNNNNNNNN…HNHNLNNHNH (86 aa). Over residues 1035-1067 the composition is skewed to basic residues; that stretch reads NNNHHHNHNHNHNHNHNHNHNHNHNHNHNHNHN. Positions 1068–1133 are enriched in low complexity; it reads NHNNNNNNNN…NNINNNNNYH (66 aa). Positions 1090-1132 form a coiled coil; sequence NNNNNNNNNNNNNNNNNNNNYYNNNINNINNNINNNINNNNNY.

The protein belongs to the protein kinase superfamily. CAMK Ser/Thr protein kinase family. CHK2 subfamily.

It carries out the reaction L-seryl-[protein] + ATP = O-phospho-L-seryl-[protein] + ADP + H(+). It catalyses the reaction L-threonyl-[protein] + ATP = O-phospho-L-threonyl-[protein] + ADP + H(+). This Dictyostelium discoideum (Social amoeba) protein is Probable serine/threonine-protein kinase fhkB (fhkB).